A 431-amino-acid chain; its full sequence is Glutamate--tRNA ligase 1 (431 aa).

The 'HIGH' region signature appears at 6–16 (PSPTGDMHIGN). A 'KMSKS' region motif is present at residues 235–239 (KMSKR). Lys-238 lines the ATP pocket.

This sequence belongs to the class-I aminoacyl-tRNA synthetase family. Glutamate--tRNA ligase type 1 subfamily. Monomer.

Its subcellular location is the cytoplasm. The enzyme catalyses tRNA(Glu) + L-glutamate + ATP = L-glutamyl-tRNA(Glu) + AMP + diphosphate. Its function is as follows. Catalyzes the attachment of glutamate to tRNA(Glu) in a two-step reaction: glutamate is first activated by ATP to form Glu-AMP and then transferred to the acceptor end of tRNA(Glu). This Campylobacter concisus (strain 13826) protein is Glutamate--tRNA ligase 1.